We begin with the raw amino-acid sequence, 458 residues long: UPF0210 protein Maeo_1412 (458 aa).

Belongs to the UPF0210 family.

This chain is UPF0210 protein Maeo_1412, found in Methanococcus aeolicus (strain ATCC BAA-1280 / DSM 17508 / OCM 812 / Nankai-3).